A 43-amino-acid polypeptide reads, in one-letter code: Protein PsbN (43 aa).

A helical transmembrane segment spans residues 7 to 29 (ITIFLSGLLVSFTGYALYTAFGQ).

Belongs to the PsbN family.

Its subcellular location is the plastid membrane. Functionally, may play a role in photosystem I and II biogenesis. The polypeptide is Protein PsbN (Cuscuta reflexa (Southern Asian dodder)).